The following is a 717-amino-acid chain: MIYQSPTIEVELLEDNIAHLCFKAQGSVNKFDRETIDSLNAALDSIKQDTSIKALMLSSAKDAFIVGADITEFLGLFAEEDAVLQSWLEQANVVFNKLEDLPFPTLSAINGFALGAGCETILATDFRIADTTARIGLPETKLGIIPGFGGTVRLPRVIGADNALEWITSGKDQRPDAALKVGAIDAVVAPEQLRPAALRMLKDAMAEKLDWQTRRAKKLAPLTLPKLEAMMSFATAKGMVFKIAGKHYPAPMAVISVIEQAAQCGRAEALQIEHQAFIKLAKTEVAQALIGIFLNDQLVKGKAKKAGKLAKKVNSAAVLGAGIMGGGIAYQSASKGTPIVMKDIAQPALDLGLGEAAKLLTAQVKRGRSTPAKMATVLNNITPALDYAPVKDTDIIVEAVVEHPKVKSMVLAEVEEHVSEDAIITSNTSTISINLLAKSLKKPERFCGMHFFNPVHKMPLVEVIRGENSSDETVASVVAYASKMGKTPIVVNDCPGFFVNRVLFPYFAGFSGLLADGADFAAIDKVMEKQFGWPMGPAYLLDVVGLDTGHHAQAVMAEGFPDRMGKSGKDAIDVMFEAERFGQKNNKGFYQYSVDHRGKPKKDLDPTSYELLQAEFGEQKAFESDEIIARTMIPMIIETVRCLEEGIIASPAEADMGLVYGLGFPPFRGGVFRYLDTIGVANFVALADKYAHLGGLYQVTDTMRELAANNGSYYQQA.

Residues methionine 1–alanine 189 form an enoyl-CoA hydratase/isomerase region. Residue aspartate 296 coordinates substrate. The 3-hydroxyacyl-CoA dehydrogenase stretch occupies residues lysine 311 to alanine 717. NAD(+)-binding positions include methionine 324, aspartate 343, valine 400–glutamate 402, lysine 407, and serine 429. Histidine 450 acts as the For 3-hydroxyacyl-CoA dehydrogenase activity in catalysis. Asparagine 453 is an NAD(+) binding site. Positions 500 and 660 each coordinate substrate.

In the N-terminal section; belongs to the enoyl-CoA hydratase/isomerase family. It in the C-terminal section; belongs to the 3-hydroxyacyl-CoA dehydrogenase family. As to quaternary structure, heterotetramer of two alpha chains (FadB) and two beta chains (FadA).

It carries out the reaction a (3S)-3-hydroxyacyl-CoA + NAD(+) = a 3-oxoacyl-CoA + NADH + H(+). It catalyses the reaction a (3S)-3-hydroxyacyl-CoA = a (2E)-enoyl-CoA + H2O. The enzyme catalyses a 4-saturated-(3S)-3-hydroxyacyl-CoA = a (3E)-enoyl-CoA + H2O. The catalysed reaction is (3S)-3-hydroxybutanoyl-CoA = (3R)-3-hydroxybutanoyl-CoA. It carries out the reaction a (3Z)-enoyl-CoA = a 4-saturated (2E)-enoyl-CoA. It catalyses the reaction a (3E)-enoyl-CoA = a 4-saturated (2E)-enoyl-CoA. It functions in the pathway lipid metabolism; fatty acid beta-oxidation. Involved in the aerobic and anaerobic degradation of long-chain fatty acids via beta-oxidation cycle. Catalyzes the formation of 3-oxoacyl-CoA from enoyl-CoA via L-3-hydroxyacyl-CoA. It can also use D-3-hydroxyacyl-CoA and cis-3-enoyl-CoA as substrate. This Shewanella halifaxensis (strain HAW-EB4) protein is Fatty acid oxidation complex subunit alpha.